The following is a 123-amino-acid chain: Guanine nucleotide exchange factor MSS4 (123 aa).

M1 is subject to N-acetylmethionine. One can recognise an MSS4 domain in the interval 9–123 (ELVSAEGRNR…YVALERVSHE (115 aa)). The Zn(2+) site is built by C23, C26, C94, and C97.

It belongs to the DSS4/MSS4 family. In terms of assembly, interacts with RAB8A.

In terms of biological role, guanine-nucleotide-releasing protein that acts on members of the SEC4/YPT1/RAB subfamily. Stimulates GDP release from both YPT1, RAB3A and RAB10, but is less active on these proteins than on the SEC4 protein. Might play a general role in vesicular transport. In Mus musculus (Mouse), this protein is Guanine nucleotide exchange factor MSS4.